Reading from the N-terminus, the 235-residue chain is Aspartate/glutamate leucyltransferase (235 aa).

Belongs to the R-transferase family. Bpt subfamily.

The protein localises to the cytoplasm. It catalyses the reaction N-terminal L-glutamyl-[protein] + L-leucyl-tRNA(Leu) = N-terminal L-leucyl-L-glutamyl-[protein] + tRNA(Leu) + H(+). The enzyme catalyses N-terminal L-aspartyl-[protein] + L-leucyl-tRNA(Leu) = N-terminal L-leucyl-L-aspartyl-[protein] + tRNA(Leu) + H(+). Functionally, functions in the N-end rule pathway of protein degradation where it conjugates Leu from its aminoacyl-tRNA to the N-termini of proteins containing an N-terminal aspartate or glutamate. The sequence is that of Aspartate/glutamate leucyltransferase from Pseudomonas fluorescens (strain ATCC BAA-477 / NRRL B-23932 / Pf-5).